Consider the following 870-residue polypeptide: NEDD4-like E3 ubiquitin-protein ligase WWP2 (870 aa).

A C2 domain is found at 1–117; the sequence is MASASSSRAG…KNNGGKMENT (117 aa). The tract at residues 150–300 is disordered; it reads SVPNGSAVTD…QLPAAAQAPD (151 aa). Positions 152-171 are enriched in polar residues; it reads PNGSAVTDGSQPPSRESSGT. A compositionally biased stretch (low complexity) spans 198–208; the sequence is GGSARTATAAS. Ser-211 bears the Phosphoserine mark. Polar residues-rich tracts occupy residues 222–235 and 262–289; these read VKNS…NGTV and SVSS…TSGT. Over residues 290-300 the composition is skewed to low complexity; the sequence is QQLPAAAQAPD. 4 consecutive WW domains span residues 300–333, 330–363, 405–437, and 444–477; these read DALP…RPLP, RPLP…RPTA, GPLP…DPRT, and PALP…DPRP. One can recognise an HECT domain in the interval 536 to 870; that stretch reads KPYDLRRRLY…IEETEGFGQE (335 aa). The active-site Glycyl thioester intermediate is the Cys-838.

As to quaternary structure, interacts with SCNN1A, SCNN1B, SCNN1G, WBP1, WBP2 and ATN1. Interacts with ERBB4, NDFIP1 and NDFIP2. Interacts with ARRDC4. Interacts with POU5F1, RBP1, EGR2 and SLC11A2. Interacts (via WW domains) with ARRDC1 (via PPxY motifs); ubiquitinates ARRDC1. Interacts (via WW domains) with ARRDC2 and ARRDC3. In terms of processing, autoubiquitinated. Ubiquitinated by the SCF(FBXL15) complex, leading to its degradation by the proteasome.

It is found in the nucleus. It catalyses the reaction S-ubiquitinyl-[E2 ubiquitin-conjugating enzyme]-L-cysteine + [acceptor protein]-L-lysine = [E2 ubiquitin-conjugating enzyme]-L-cysteine + N(6)-ubiquitinyl-[acceptor protein]-L-lysine.. The protein operates within protein modification; protein ubiquitination. Its activity is regulated as follows. Activated by NDFIP1- and NDFIP2-binding. Its function is as follows. E3 ubiquitin-protein ligase which accepts ubiquitin from an E2 ubiquitin-conjugating enzyme in the form of a thioester and then directly transfers the ubiquitin to targeted substrates. Polyubiquitinates POU5F1 by 'Lys-63'-linked conjugation and promotes it to proteasomal degradation; regulates POU5F1 protein level during differentiation of embryonal carcinoma cells (ECCs) but not in undifferentiated ECCs and embryonic stem cells (ESCs). Ubiquitinates EGR2 and promotes it to proteasomal degradation; in T-cells the ubiquitination inhibits activation-induced cell death. Ubiquitinates SLC11A2; the ubiquitination is enhanced by presence of NDFIP1 and NDFIP2. Ubiquitinates RPB1 and promotes it to proteasomal degradation. The chain is NEDD4-like E3 ubiquitin-protein ligase WWP2 (Wwp2) from Mus musculus (Mouse).